The primary structure comprises 62 residues: UPF0337 protein XCC0070 (62 aa).

Positions 32 to 62 (LEGAAEKNIGKVQRKAGELADDVRDATKSTR) are disordered.

This sequence belongs to the UPF0337 (CsbD) family.

This is UPF0337 protein XCC0070 from Xanthomonas campestris pv. campestris (strain ATCC 33913 / DSM 3586 / NCPPB 528 / LMG 568 / P 25).